A 233-amino-acid chain; its full sequence is Protease inhibitor Egf1.0 (233 aa).

An N-terminal signal peptide occupies residues 1–28 (MYIDTGIMSNNIFLFAFFALVGLTRIEA). The 53-residue stretch at 52–104 (CRENEHYNSTRIECEEECNDRNNKLCYRFQQFCWCNEGYIRNSSHICVKLEDC) folds into the TIL domain. The interval 201–233 (FGKPKNSSAEKKPLETETQAQKFNGIIDQETLD) is disordered.

This sequence belongs to the polydnaviridae EGF-like motif protein family. As to quaternary structure, interacts with host PAP1 and PAP3.

In terms of biological role, counteracts the host humoral immune response by inhibiting the processing and the amidolytic activity of host PAP3. Thereby, melanization of host hemolymph, normally producing several reactive intermediates toxic for viruses, is deregulated and proper immune response cannot occur. This Microplitis demolitor (Parasitoid wasp) protein is Protease inhibitor Egf1.0 (O12).